Reading from the N-terminus, the 78-residue chain is Small ribosomal subunit protein bS18 (78 aa).

This sequence belongs to the bacterial ribosomal protein bS18 family. As to quaternary structure, part of the 30S ribosomal subunit. Forms a tight heterodimer with protein bS6.

Binds as a heterodimer with protein bS6 to the central domain of the 16S rRNA, where it helps stabilize the platform of the 30S subunit. The chain is Small ribosomal subunit protein bS18 from Limosilactobacillus fermentum (strain NBRC 3956 / LMG 18251) (Lactobacillus fermentum).